The chain runs to 193 residues: Imidazoleglycerol-phosphate dehydratase (193 aa).

This sequence belongs to the imidazoleglycerol-phosphate dehydratase family.

It is found in the cytoplasm. It catalyses the reaction D-erythro-1-(imidazol-4-yl)glycerol 3-phosphate = 3-(imidazol-4-yl)-2-oxopropyl phosphate + H2O. It functions in the pathway amino-acid biosynthesis; L-histidine biosynthesis; L-histidine from 5-phospho-alpha-D-ribose 1-diphosphate: step 6/9. This chain is Imidazoleglycerol-phosphate dehydratase, found in Methanoculleus marisnigri (strain ATCC 35101 / DSM 1498 / JR1).